Reading from the N-terminus, the 471-residue chain is Fructokinase-like 1, chloroplastic (471 aa).

A chloroplast-targeting transit peptide spans 1–38 (MASLLIFPHLHHFDSSLDRREVLVVRHSQASRRFLTPK). Residues 36–85 (TPKASINGSGITNGAAAETTSKPSRKGRKKKQTSTVIEKDNTETDPELNP) form a disordered region. The span at 39–57 (ASINGSGITNGAAAETTSK) shows a compositional bias: polar residues. Residues 58 to 67 (PSRKGRKKKQ) are compositionally biased toward basic residues.

This sequence belongs to the carbohydrate kinase PfkB family. As to quaternary structure, interacts with CITRX/TRXz. Interacts with PTAC7. Self-interacts. Binds to FLN2. Associates with the plastid-encoded RNA polymerase (PEP) complex.

It localises to the plastid. Its subcellular location is the chloroplast. Required for proper chloroplast development, most likely through regulating plastid-encoded polymerase (PEP) dependent chloroplast transcription. Acts as a component of the transcriptionally active plastid chromosome that is required for plastid gene expression. This chain is Fructokinase-like 1, chloroplastic, found in Arabidopsis thaliana (Mouse-ear cress).